A 493-amino-acid polypeptide reads, in one-letter code: MECQRCPASARNPATVESRKEKFCDECFIKFVSTKQRKQMMKDEYFRNLFKVIYPFEKEGSVSKILLPLSLSDSGSLVMLDIVHDLLLEQTKQHNNRTGFTVDVLTVFTEENVSVIKERMESLINEKMSQLNKISNIFNVHFIDVNEFFNNASEVSTFIIDNENFEIFSKSKSVDDSNILTLKEILGKYCLNNSSRSDLISIIKTQLIKHFAYENGYNAIMWGHSMTKLSEVIISLVVKGKGSQIATFLDSESFDTLNNKPCKYKNLYPMKDLLSVEIESFLQIRNLAQFLINVEETNVKPNCLIARKSLPSLGQQKLVKNMTINEITNKYFQDIQNDYSNIISTVLRTADKLTQPKSSMAKPSQCQICQSKIYTNPSNWLNRITVTSPYPVETTEEKYLFKQWQDSKLGQSHTHYVELLNEIKQGASNSLDVEDGDVKLCYGCLILLNTSIKDKNLVWPKVDTMDITANATNNNKELSQILDQFEINSDGEE.

Serine 489 carries the phosphoserine modification.

It belongs to the CTU2/NCS2 family. In terms of assembly, interacts with NCS6 and URM1. May act by forming a heterodimer with NCS6.

The protein resides in the cytoplasm. The protein operates within tRNA modification; 5-methoxycarbonylmethyl-2-thiouridine-tRNA biosynthesis. Plays a central role in 2-thiolation of mcm(5)S(2)U at tRNA wobble positions of tRNA(Lys), tRNA(Glu) and tRNA(Gln). May act by forming a heterodimer with NCS6 that ligates sulfur from thiocarboxylated URM1 onto the uridine of tRNAs at wobble position. Prior mcm(5) tRNA modification by the elongator complex is required for 2-thiolation. May also be involved in protein urmylation. In Saccharomyces cerevisiae (strain RM11-1a) (Baker's yeast), this protein is Cytoplasmic tRNA 2-thiolation protein 2.